We begin with the raw amino-acid sequence, 78 residues long: Translational regulator CsrA (78 aa).

This sequence belongs to the CsrA/RsmA family. As to quaternary structure, homodimer; the beta-strands of each monomer intercalate to form a hydrophobic core, while the alpha-helices form wings that extend away from the core.

The protein resides in the cytoplasm. In terms of biological role, a translational regulator that binds mRNA to regulate translation initiation and/or mRNA stability. Usually binds in the 5'-UTR at or near the Shine-Dalgarno sequence preventing ribosome-binding, thus repressing translation. Its main target seems to be the major flagellin gene, while its function is anatagonized by FliW. In Oleidesulfovibrio alaskensis (strain ATCC BAA-1058 / DSM 17464 / G20) (Desulfovibrio alaskensis), this protein is Translational regulator CsrA.